Here is a 290-residue protein sequence, read N- to C-terminus: Acetyl-coenzyme A carboxylase carboxyl transferase subunit beta (290 aa).

In terms of domain architecture, CoA carboxyltransferase N-terminal spans 29–290; that stretch reads LWGKCPECSQ…RLHGYREKRK (262 aa). The Zn(2+) site is built by cysteine 33, cysteine 36, cysteine 52, and cysteine 55. Residues 33-55 form a C4-type zinc finger; it reads CPECSQVVYRKDLLENANVCSNC.

The protein belongs to the AccD/PCCB family. Acetyl-CoA carboxylase is a heterohexamer composed of biotin carboxyl carrier protein (AccB), biotin carboxylase (AccC) and two subunits each of ACCase subunit alpha (AccA) and ACCase subunit beta (AccD). Zn(2+) serves as cofactor.

It localises to the cytoplasm. It carries out the reaction N(6)-carboxybiotinyl-L-lysyl-[protein] + acetyl-CoA = N(6)-biotinyl-L-lysyl-[protein] + malonyl-CoA. Its pathway is lipid metabolism; malonyl-CoA biosynthesis; malonyl-CoA from acetyl-CoA: step 1/1. Its function is as follows. Component of the acetyl coenzyme A carboxylase (ACC) complex. Biotin carboxylase (BC) catalyzes the carboxylation of biotin on its carrier protein (BCCP) and then the CO(2) group is transferred by the transcarboxylase to acetyl-CoA to form malonyl-CoA. This chain is Acetyl-coenzyme A carboxylase carboxyl transferase subunit beta, found in Prochlorococcus marinus (strain MIT 9211).